The chain runs to 350 residues: Delta(6)-protoilludene synthase STEHIDRAFT_64702 (350 aa).

Mg(2+) contacts are provided by D89, N225, S229, and E233. Positions 89 to 93 (DEHSD) match the D(D/E)XX(D/E) motif motif. An NSE motif motif is present at residues 225-233 (NDIVSYNIE). 2 residues coordinate (2E,6E)-farnesyl diphosphate: R314 and Y315.

Belongs to the terpene synthase family. Mg(2+) serves as cofactor. Requires Mn(2+) as cofactor. The cofactor is Ca(2+). It depends on Ni(2+) as a cofactor. Co(2+) is required as a cofactor.

The catalysed reaction is (2E,6E)-farnesyl diphosphate = Delta(6)-protoilludene + diphosphate. The enzyme catalyses (2E,6E)-farnesyl diphosphate = alpha-selinene + diphosphate. Its activity is regulated as follows. Ca(2+) switches the cyclization mechanism of delta(6)-protoilludene synthase from 1,11 to 1,10 cyclization which leads to the production of beta-elemene. Terpene cyclase that catalyzes the cyclization of farnesyl diphosphate (FPP) to delta(6)-protoilludene. In presence of Ca(2+), a significant switch from 1,11 to a dual 1,11/1,10 cyclization occurs, producing beta-elemene as the major product, with lower levels of delta(6)-protoilludene and (E)-beta-caryophyllene, and traces of beta-selinene and alpha-selinene. In Stereum hirsutum (strain FP-91666) (White-rot fungus), this protein is Delta(6)-protoilludene synthase STEHIDRAFT_64702.